The primary structure comprises 458 residues: Alpha-2C adrenergic receptor (458 aa).

Residues 1 to 51 (MASPALAAALAAAAAEGPNGSDAGEWGSGGGANASGTDWGPPPGQYSAGAV) lie on the Extracellular side of the membrane. N19 and N33 each carry an N-linked (GlcNAc...) asparagine glycan. A helical membrane pass occupies residues 52 to 76 (AGLAAVVGFLIVFTVVGNVLVVIAV). At 77–88 (LTSRALRAPQNL) the chain is on the cytoplasmic side. Residues 89–114 (FLVSLASADILVATLVMPFSLANELM) traverse the membrane as a helical segment. Residues 115-124 (AYWYFGQVWC) lie on the Extracellular side of the membrane. An intrachain disulfide couples C124 to C202. The chain crosses the membrane as a helical span at residues 125–147 (GVYLALDVLFCTSSIVHLCAISL). The Cytoplasmic portion of the chain corresponds to 148 to 168 (DRYWSVTQAVEYNLKRTPRRV). The chain crosses the membrane as a helical span at residues 169 to 191 (KATIVAVWLISAVISFPPLVSFY). The Extracellular portion of the chain corresponds to 192-207 (RRPDGAAYPQCGLNDE). Residues 208–231 (TWYILSSCIGSFFAPCLIMGLVYA) traverse the membrane as a helical segment. The Cytoplasmic segment spans residues 232–379 (RIYRVAKLRT…QAREKRFTFV (148 aa)). Residues 245–343 (SEKRGPAGPD…SPGPGGRLSR (99 aa)) form a disordered region. The segment covering 291–303 (RRRRRGALRRGGR) has biased composition (basic residues). The helical transmembrane segment at 380–403 (LAVVMGVFVLCWFPFFFSYSLYGI) threads the bilayer. Residues 404-416 (CREACQLPEPLFK) lie on the Extracellular side of the membrane. A helical membrane pass occupies residues 417 to 437 (FFFWIGYCNSSLNPVIYTVFN). At 438-458 (QDFRRSFKHILFRRRRRGFRQ) the chain is on the cytoplasmic side.

It belongs to the G-protein coupled receptor 1 family. Adrenergic receptor subfamily. ADRA2C sub-subfamily.

It is found in the cell membrane. Its function is as follows. Alpha-2 adrenergic receptors mediate the catecholamine-induced inhibition of adenylate cyclase through the action of G proteins. The sequence is that of Alpha-2C adrenergic receptor (Adra2c) from Rattus norvegicus (Rat).